The sequence spans 259 residues: UPF0246 protein Pfl01_0961 (259 aa).

It belongs to the UPF0246 family.

The chain is UPF0246 protein Pfl01_0961 from Pseudomonas fluorescens (strain Pf0-1).